A 538-amino-acid chain; its full sequence is Pentatricopeptide repeat-containing protein At1g33350 (538 aa).

PPR repeat units follow at residues 87-123, 125-159, 160-191, 192-226, 227-253, 259-293, 294-324, 325-359, 363-398, and 399-433; these read NTHL…SVPR, NHFI…GFHL, YVVV…MSER, NVVS…DVPS, WNAI…MINE, NEVT…DLSS, DVFV…ASKK, SLTA…NIND, DHIT…GIEP, and RIEH…ADEA. A type E motif region spans residues 434 to 509; that stretch reads IWGSLLNACK…PPGWSRIEID (76 aa).

It belongs to the PPR family. PCMP-E subfamily.

This chain is Pentatricopeptide repeat-containing protein At1g33350 (PCMP-E57), found in Arabidopsis thaliana (Mouse-ear cress).